The following is a 286-amino-acid chain: Plasma membrane ascorbate-dependent reductase CYBRD1 (286 aa).

Over 1-7 the chain is Cytoplasmic; sequence MAMEGYR. A helical membrane pass occupies residues 8-32; that stretch reads GFLGLLVSALLVGFLSVIFVLIWVL. The region spanning 15–220 is the Cytochrome b561 domain; sequence SALLVGFLSV…FGALIFWIVT (206 aa). The Extracellular segment spans residues 33–47; the sequence is HFREGLGWDGGALEF. The helical transmembrane segment at 48–69 threads the bilayer; sequence NWHPVLAVTGFVFIQGIAIIVY. The heme b site is built by H50, R70, and K79. Residues 70 to 78 are Cytoplasmic-facing; that stretch reads RLPWTWKCS. Positions 79 and 83 each coordinate L-ascorbate. A helical transmembrane segment spans residues 79–105; sequence KFLMKSIHAGLNAVAAILAIISVVAVF. H86 contributes to the heme b binding site. The Extracellular portion of the chain corresponds to 106-118; it reads DYHNVRKIPHMYS. H108 is a Fe(3+) binding site. Heme b is bound by residues 115–118 and H120; that span reads HMYS. A helical transmembrane segment spans residues 119 to 144; that stretch reads LHSWVGLTVLILYIQQLVVGFFIFLL. The Cytoplasmic portion of the chain corresponds to 145–151; sequence PWAPPSL. Position 152 (R152) interacts with L-ascorbate. A helical membrane pass occupies residues 152–179; that stretch reads RAIVMPIHVYSGLLLFGTVIATVLMGVT. Heme b is bound by residues H159 and E180. At 180-197 the chain is on the extracellular side; that stretch reads EKLFFVLKNPSYHSFPPE. The helical transmembrane segment at 198 to 222 threads the bilayer; sequence GVFTNTLGLLILVFGALIFWIVTRP. At 223–286 the chain is on the cytoplasmic side; sequence QWKRPREPGS…LVDTGQRSTM (64 aa). Residue K225 participates in heme b binding. At S232 the chain carries Phosphoserine. T285 is subject to Phosphothreonine.

Homodimer. Heme b serves as cofactor. In terms of tissue distribution, highly expressed in all regions of the small intestine and colon studied in suckling animals. However, after weaning, when iron absorption declines significantly, strong expression is retained only in the duodenum. Also expressed in respiratory epithelium.

Its subcellular location is the cell membrane. It is found in the apical cell membrane. The catalysed reaction is Fe(3+)(out) + L-ascorbate(in) = monodehydro-L-ascorbate radical(in) + Fe(2+)(out) + H(+). The enzyme catalyses Cu(2+)(out) + L-ascorbate(in) = Cu(+)(out) + monodehydro-L-ascorbate radical(in) + H(+). It carries out the reaction monodehydro-L-ascorbate radical(out) + L-ascorbate(in) = monodehydro-L-ascorbate radical(in) + L-ascorbate(out). Plasma membrane reductase that uses cytoplasmic ascorbate as an electron donor to reduce extracellular Fe(3+) into Fe(2+). Probably functions in dietary iron absorption at the brush border of duodenal enterocytes by producing Fe(2+), the divalent form of iron that can be transported into enterocytes. It is also able to reduce extracellular monodehydro-L-ascorbate and may be involved in extracellular ascorbate regeneration by erythrocytes in blood. May also act as a ferrireductase in airway epithelial cells. May also function as a cupric transmembrane reductase. The sequence is that of Plasma membrane ascorbate-dependent reductase CYBRD1 from Rattus norvegicus (Rat).